The primary structure comprises 753 residues: Neuroendocrine convertase 1 (753 aa).

The N-terminal stretch at 1-27 (MEQRGWTLQCTAFAFFCVWCALNSVKA) is a signal peptide. Positions 28–110 (KRQFVNEWAA…QQYEKERSKR (83 aa)) are excised as a propeptide. One can recognise a Peptidase S8 domain in the interval 129-450 (QWYLQDTRMT…FGLLNAKALV (322 aa)). Active-site charge relay system residues include Asp167 and His208. 2 cysteine pairs are disulfide-bonded: Cys225–Cys374 and Cys317–Cys347. The Charge relay system role is filled by Ser382. Residue Asn401 is glycosylated (N-linked (GlcNAc...) asparagine). Positions 460-597 (NVPEKKECVV…KLILHGTSSQ (138 aa)) constitute a P/Homo B domain. Residues Cys467 and Cys494 are joined by a disulfide bond. Residues 633–651 (QKSLNGNLLVPKNSSSSNV) are compositionally biased toward polar residues. A disordered region spans residues 633 to 663 (QKSLNGNLLVPKNSSSSNVEGRRDEQVQGTP). An N-linked (GlcNAc...) asparagine glycan is attached at Asn645.

The protein belongs to the peptidase S8 family. Furin subfamily. Ca(2+) is required as a cofactor.

It localises to the cytoplasmic vesicle. The protein resides in the secretory vesicle. The enzyme catalyses Release of protein hormones, neuropeptides and renin from their precursors, generally by hydrolysis of -Lys-Arg-|- bonds.. Involved in the processing of hormone and other protein precursors at sites comprised of pairs of basic amino acid residues. Substrates include POMC, renin, enkephalin, dynorphin, somatostatin, insulin and AGRP. This is Neuroendocrine convertase 1 (Pcsk1) from Mus musculus (Mouse).